Consider the following 411-residue polypeptide: Na(+)-translocating NADH-quinone reductase subunit F (411 aa).

Residues 5–25 (VILALGIAAFTVIVLVLVAII) form a helical membrane-spanning segment. One can recognise a 2Fe-2S ferredoxin-type domain in the interval 36 to 130 (GDITIDINDD…NMEVELPEEI (95 aa)). Positions 73, 79, 82, and 114 each coordinate [2Fe-2S] cluster. In terms of domain architecture, FAD-binding FR-type spans 133–273 (VKKWECTVIS…SGPFGEFFAK (141 aa)). Residues 276–393 (DAEMVFIGGG…PVMNAAVIKM (118 aa)) form a catalytic region.

The protein belongs to the NqrF family. In terms of assembly, composed of six subunits; NqrA, NqrB, NqrC, NqrD, NqrE and NqrF. [2Fe-2S] cluster is required as a cofactor. It depends on FAD as a cofactor.

The protein resides in the cell inner membrane. It catalyses the reaction a ubiquinone + n Na(+)(in) + NADH + H(+) = a ubiquinol + n Na(+)(out) + NAD(+). NQR complex catalyzes the reduction of ubiquinone-1 to ubiquinol by two successive reactions, coupled with the transport of Na(+) ions from the cytoplasm to the periplasm. The first step is catalyzed by NqrF, which accepts electrons from NADH and reduces ubiquinone-1 to ubisemiquinone by a one-electron transfer pathway. This chain is Na(+)-translocating NADH-quinone reductase subunit F, found in Haemophilus influenzae (strain ATCC 51907 / DSM 11121 / KW20 / Rd).